The sequence spans 615 residues: Chaperone protein DnaK (615 aa).

Thr174 bears the Phosphothreonine; by autocatalysis mark. The tract at residues 581-615 (QAAPKDGAEGDAKSADDNTVDGDFEEVDPNKDDKK) is disordered. Residues 586–596 (DGAEGDAKSAD) show a composition bias toward basic and acidic residues. The segment covering 598–607 (NTVDGDFEEV) has biased composition (acidic residues).

It belongs to the heat shock protein 70 family.

Its function is as follows. Acts as a chaperone. This is Chaperone protein DnaK from Leuconostoc mesenteroides subsp. mesenteroides (strain ATCC 8293 / DSM 20343 / BCRC 11652 / CCM 1803 / JCM 6124 / NCDO 523 / NBRC 100496 / NCIMB 8023 / NCTC 12954 / NRRL B-1118 / 37Y).